The following is a 103-amino-acid chain: N(4)-acetylcytidine amidohydrolase (103 aa).

Residues 6-101 (ITFSQRFQDD…QTQFYVIEFK (96 aa)) form the ASCH domain. Catalysis depends on lysine 21, which acts as the Proton acceptor. Threonine 24 (nucleophile) is an active-site residue. Glutamate 74 (proton donor) is an active-site residue.

The protein belongs to the N(4)-acetylcytidine amidohydrolase family.

The catalysed reaction is N(4)-acetylcytidine + H2O = cytidine + acetate + H(+). The enzyme catalyses N(4)-acetyl-2'-deoxycytidine + H2O = 2'-deoxycytidine + acetate + H(+). It catalyses the reaction N(4)-acetylcytosine + H2O = cytosine + acetate + H(+). Functionally, catalyzes the hydrolysis of N(4)-acetylcytidine (ac4C). The sequence is that of N(4)-acetylcytidine amidohydrolase (yqfB) from Shigella boydii serotype 4 (strain Sb227).